Consider the following 95-residue polypeptide: Large ribosomal subunit protein bL25 (95 aa).

It belongs to the bacterial ribosomal protein bL25 family. Part of the 50S ribosomal subunit; part of the 5S rRNA/L5/L18/L25 subcomplex. Contacts the 5S rRNA. Binds to the 5S rRNA independently of L5 and L18.

In terms of biological role, this is one of the proteins that binds to the 5S RNA in the ribosome where it forms part of the central protuberance. In Shewanella piezotolerans (strain WP3 / JCM 13877), this protein is Large ribosomal subunit protein bL25.